A 135-amino-acid chain; its full sequence is Putative pre-16S rRNA nuclease (135 aa).

This sequence belongs to the YqgF nuclease family.

The protein resides in the cytoplasm. Functionally, could be a nuclease involved in processing of the 5'-end of pre-16S rRNA. The sequence is that of Putative pre-16S rRNA nuclease from Clostridium acetobutylicum (strain ATCC 824 / DSM 792 / JCM 1419 / IAM 19013 / LMG 5710 / NBRC 13948 / NRRL B-527 / VKM B-1787 / 2291 / W).